The primary structure comprises 248 residues: PF03932 family protein CutC (248 aa).

It belongs to the CutC family. In terms of assembly, homodimer.

It localises to the cytoplasm. This is PF03932 family protein CutC from Escherichia coli O45:K1 (strain S88 / ExPEC).